Reading from the N-terminus, the 378-residue chain is Protein RecA (378 aa).

66-73 (GPESSGKT) serves as a coordination point for ATP. The disordered stretch occupies residues 333–378 (PDAAKAEAATDAAAAADTAGTDDAAKSVPAPASKTAKATKATAVKS). A compositionally biased stretch (low complexity) spans 338 to 378 (AEAATDAAAAADTAGTDDAAKSVPAPASKTAKATKATAVKS).

This sequence belongs to the RecA family.

It is found in the cytoplasm. In terms of biological role, can catalyze the hydrolysis of ATP in the presence of single-stranded DNA, the ATP-dependent uptake of single-stranded DNA by duplex DNA, and the ATP-dependent hybridization of homologous single-stranded DNAs. It interacts with LexA causing its activation and leading to its autocatalytic cleavage. The protein is Protein RecA of Streptomyces venezuelae (strain ATCC 10712 / CBS 650.69 / DSM 40230 / JCM 4526 / NBRC 13096 / PD 04745).